The primary structure comprises 1746 residues: Inactive tyrosine-protein kinase PEAK1 (1746 aa).

Residues 44-66 form a disordered region; it reads KTNANHSNNHRIRNTGNFRPPVA. Serine 281 is modified (phosphoserine). 2 disordered regions span residues 334–411 and 489–517; these read QSMV…KVPE and LEGPVNSPKTKSSSSTPNSPVTSSSLTPG. Residues 338–349 show a composition bias toward low complexity; sequence SSDSTSPDSSLT. A compositionally biased stretch (polar residues) spans 355 to 364; sequence ETASSLSQKI. The span at 492–513 shows a compositional bias: low complexity; it reads PVNSPKTKSSSSTPNSPVTSSS. Residues serine 540, serine 572, and serine 587 each carry the phosphoserine modification. Residues 551 to 577 are disordered; sequence ITSGTGPNVPPRKNCHKSAPTSPTATN. Tyrosine 635 and tyrosine 641 each carry phosphotyrosine. Serine 648 bears the Phosphoserine mark. Residue tyrosine 665 is modified to Phosphotyrosine. Disordered stretches follow at residues 671–700, 713–764, 802–920, 1052–1102, and 1138–1158; these read ESKVPDNTTSKTTDCLQTKGFSNSTEHKRG, LNRG…EKAS, DADV…AADA, VTED…DPNP, and GKTDQEAPNASQPTPPPLPKK. Over residues 675–694 the composition is skewed to polar residues; it reads PDNTTSKTTDCLQTKGFSNS. Positions 718–730 are enriched in low complexity; sequence SSPQRSYSSSHSS. Polar residues-rich tracts occupy residues 748 to 758 and 820 to 841; these read TQESQMVGSSS and LFTSQPSGEAEAPQTTDSPTTK. Phosphoserine occurs at positions 826 and 854. Residues 864 to 874 show a composition bias toward pro residues; that stretch reads SEPPAPFPPPR. Positions 889–902 are enriched in polar residues; the sequence is HFTNWTKPTSPTRS. Serine 898 is modified (phosphoserine). 3 stretches are compositionally biased toward basic and acidic residues: residues 903-920, 1052-1062, and 1084-1094; these read TEAESVLHSEGSRRAADA, VTEDFSPRDPR, and ELEREDGKEDI. Threonine 1151 is modified (phosphothreonine). A Phosphotyrosine modification is found at tyrosine 1188. The segment at 1285 to 1311 is required for homodimerization; sequence EVVGKIRSLHTDALKKLAVKCEDLFMA. A Protein kinase domain is found at 1313 to 1675; sequence QKDQLRFGVD…LLWGPREDLF (363 aa). Serine 1374 is modified (phosphoserine). The segment at 1402–1456 is disordered; sequence LLPWEDPDDPEKDEDDMEETEEDAKGETDGKNPKPCSEAASSQKENQGVMSKKQR. Acidic residues predominate over residues 1406–1423; it reads EDPDDPEKDEDDMEETEE. Residues 1424 to 1433 are compositionally biased toward basic and acidic residues; that stretch reads DAKGETDGKN. Positions 1440-1450 are enriched in polar residues; sequence AASSQKENQGV. A required for homodimerization region spans residues 1670–1743; the sequence is PREDLFQTFT…DSLSCIVKIL (74 aa).

It belongs to the protein kinase superfamily. Homodimer. Interacts with BCAR1 and CRK. Interacts with PRAG1. Interacts (when phosphorylated at Tyr-1188) with SHC1 (via PID domain). Found in a complex with PPP1CA, PPP1CC, SHC1 and PEAK1. Interacts (when phosphorylated at Tyr-635) with tensin TNS3 (when phosphorylated on the SH2 domain); TNS3 also interacts with integrins ITGB1, ITGB3 and ITGB5 and mediates their association with PEAK1. Interacts with RASAL2 and GRB2. In terms of processing, phosphorylated on tyrosine in a CSK-dependent manner in response to adhesion to fibronectin and to EGF stimulation. Phosphorylation at Tyr-665 by a Src family kinase controls subcellular localization to focal adhesion and focal adhesion dynamics. Phosphorylation at Tyr-1188 is essential for binding to SHC1. Phosphorylation at Tyr-635 promotes interaction with tensin TNS3.

The protein resides in the cytoplasm. Its subcellular location is the cytoskeleton. It is found in the cell junction. The protein localises to the focal adhesion. Its function is as follows. Probable catalytically inactive kinase. Scaffolding protein that regulates the cytoskeleton to control cell spreading and migration by modulating focal adhesion dynamics. Acts as a scaffold for mediating EGFR signaling. The chain is Inactive tyrosine-protein kinase PEAK1 (PEAK1) from Homo sapiens (Human).